Here is a 301-residue protein sequence, read N- to C-terminus: Probable alpha-L-glutamate ligase (301 aa).

Residues 104-287 (LQLLSRKGIG…VAGMIVEFIE (184 aa)) enclose the ATP-grasp domain. ATP is bound by residues Lys141, 178-179 (EF), Asp187, and 211-213 (RSN). Residues Asp248, Glu260, and Asn262 each coordinate Mg(2+). Residues Asp248, Glu260, and Asn262 each coordinate Mn(2+).

The protein belongs to the RimK family. It depends on Mg(2+) as a cofactor. The cofactor is Mn(2+).

This is Probable alpha-L-glutamate ligase from Teredinibacter turnerae (strain ATCC 39867 / T7901).